Here is a 210-residue protein sequence, read N- to C-terminus: 3-demethoxyubiquinol 3-hydroxylase (210 aa).

Residues glutamate 59, glutamate 89, histidine 92, glutamate 141, glutamate 173, and histidine 176 each contribute to the Fe cation site.

The protein belongs to the COQ7 family. It depends on Fe cation as a cofactor.

The protein resides in the cell membrane. It carries out the reaction a 5-methoxy-2-methyl-3-(all-trans-polyprenyl)benzene-1,4-diol + AH2 + O2 = a 3-demethylubiquinol + A + H2O. It participates in cofactor biosynthesis; ubiquinone biosynthesis. Catalyzes the hydroxylation of 2-nonaprenyl-3-methyl-6-methoxy-1,4-benzoquinol during ubiquinone biosynthesis. In Marinomonas sp. (strain MWYL1), this protein is 3-demethoxyubiquinol 3-hydroxylase.